The following is a 349-amino-acid chain: Anthranilate phosphoribosyltransferase (349 aa).

Residues Gly-94, 97 to 98 (GD), Thr-102, 104 to 107 (NIST), 122 to 130 (KHGNRSVSS), and Ser-134 each bind 5-phospho-alpha-D-ribose 1-diphosphate. Gly-94 is an anthranilate binding site. Mg(2+) is bound at residue Ser-106. Asn-125 contacts anthranilate. Arg-180 provides a ligand contact to anthranilate. Mg(2+) contacts are provided by Asp-239 and Glu-240.

The protein belongs to the anthranilate phosphoribosyltransferase family. In terms of assembly, homodimer. It depends on Mg(2+) as a cofactor.

It catalyses the reaction N-(5-phospho-beta-D-ribosyl)anthranilate + diphosphate = 5-phospho-alpha-D-ribose 1-diphosphate + anthranilate. It functions in the pathway amino-acid biosynthesis; L-tryptophan biosynthesis; L-tryptophan from chorismate: step 2/5. Its function is as follows. Catalyzes the transfer of the phosphoribosyl group of 5-phosphorylribose-1-pyrophosphate (PRPP) to anthranilate to yield N-(5'-phosphoribosyl)-anthranilate (PRA). The chain is Anthranilate phosphoribosyltransferase from Trichlorobacter lovleyi (strain ATCC BAA-1151 / DSM 17278 / SZ) (Geobacter lovleyi).